The chain runs to 294 residues: Golgi to ER traffic protein 2 (294 aa).

Positions 1 to 104 (MSSELSETEK…QATSPQETID (104 aa)) are disordered. Over 1–166 (MSSELSETEK…LDYNNYLINN (166 aa)) the chain is Cytoplasmic. Residues 12–21 (KLIRERRQKK) show a composition bias toward basic residues. Over residues 34-65 (ITGQAENSQLDTESPLDSKSSRETTPTVTKVD) the composition is skewed to polar residues. The span at 85–95 (KVEKSQKKKEQ) shows a compositional bias: basic and acidic residues. A helical membrane pass occupies residues 167–187 (LKVWSIIFKWCFFLIPYLFAL). Topologically, residues 188–205 (TRSEPISFLPEQFSNPSN) are lumenal. Residues 206–225 (FFMIFLSFEIVATSIYFQKL) traverse the membrane as a helical segment. At 226 to 272 (QNIEKSNKINGFQSNNKIVNLVSLIPEGVLPVPDIKGKVIMALQYWD) the chain is on the cytoplasmic side. The helical transmembrane segment at 273-293 (VFSMFLTDICFVLVMMGLFKL) threads the bilayer. Residue isoleucine 294 is a topological domain, lumenal.

The protein belongs to the GET2 family. Component of the Golgi to ER traffic (GET) complex, which is composed of GET1, GET2 and GET3. Within the complex, GET1 and GET2 form a heterotetramer which is stabilized by phosphatidylinositol binding and which binds to the GET3 homodimer.

The protein resides in the endoplasmic reticulum membrane. The protein localises to the golgi apparatus membrane. Required for the post-translational delivery of tail-anchored (TA) proteins to the endoplasmic reticulum. Together with GET1, acts as a membrane receptor for soluble GET3, which recognizes and selectively binds the transmembrane domain of TA proteins in the cytosol. The GET complex cooperates with the HDEL receptor ERD2 to mediate the ATP-dependent retrieval of resident ER proteins that contain a C-terminal H-D-E-L retention signal from the Golgi to the ER. This chain is Golgi to ER traffic protein 2, found in Vanderwaltozyma polyspora (strain ATCC 22028 / DSM 70294 / BCRC 21397 / CBS 2163 / NBRC 10782 / NRRL Y-8283 / UCD 57-17) (Kluyveromyces polysporus).